The primary structure comprises 225 residues: NAD(P)H-quinone oxidoreductase subunit K, chloroplastic (225 aa).

Residues Cys-43, Cys-44, Cys-108, and Cys-139 each contribute to the [4Fe-4S] cluster site.

Belongs to the complex I 20 kDa subunit family. In terms of assembly, NDH is composed of at least 16 different subunits, 5 of which are encoded in the nucleus. [4Fe-4S] cluster serves as cofactor.

The protein localises to the plastid. It localises to the chloroplast thylakoid membrane. It catalyses the reaction a plastoquinone + NADH + (n+1) H(+)(in) = a plastoquinol + NAD(+) + n H(+)(out). It carries out the reaction a plastoquinone + NADPH + (n+1) H(+)(in) = a plastoquinol + NADP(+) + n H(+)(out). NDH shuttles electrons from NAD(P)H:plastoquinone, via FMN and iron-sulfur (Fe-S) centers, to quinones in the photosynthetic chain and possibly in a chloroplast respiratory chain. The immediate electron acceptor for the enzyme in this species is believed to be plastoquinone. Couples the redox reaction to proton translocation, and thus conserves the redox energy in a proton gradient. This is NAD(P)H-quinone oxidoreductase subunit K, chloroplastic from Oenothera argillicola (Appalachian evening primrose).